A 144-amino-acid polypeptide reads, in one-letter code: Large ribosomal subunit protein uL15 (144 aa).

The interval 1–52 is disordered; it reads MRLNTLSPAEGAKHAPKRVGRGIGSGLGKTGGRGHKGQKSRSGGGVRRGFEG. The span at 21–31 shows a compositional bias: gly residues; sequence RGIGSGLGKTG.

The protein belongs to the universal ribosomal protein uL15 family. In terms of assembly, part of the 50S ribosomal subunit.

In terms of biological role, binds to the 23S rRNA. The chain is Large ribosomal subunit protein uL15 from Buchnera aphidicola subsp. Acyrthosiphon kondoi (Acyrthosiphon kondoi symbiotic bacterium).